The primary structure comprises 255 residues: Propionicin-F (255 aa).

2 consecutive propeptides follow at residues 1 to 101 (MNTK…RVSC) and 145 to 255 (GTPT…DETV).

The protein resides in the secreted. Functionally, bacteriocin with specific antibacterial activity against strains of P.freudenreichii. No antibacterial activity was detected against P.acidipropionici, P.jensenii and P.thoenii. The protein is Propionicin-F of Propionibacterium freudenreichii subsp. freudenreichii.